A 129-amino-acid polypeptide reads, in one-letter code: MRKIYATGKRKTAIAKVWLTPGKGELSINEQSLNQWLGGHEAIKMKVMQPLLLTKQEQSVDIKAVVFGGGYSAQAEALRHGISKALNAYDIAFRAILKPKGLLTRDSRVVERKKYGKRKARRSPQFSKR.

It belongs to the universal ribosomal protein uS9 family.

This is Small ribosomal subunit protein uS9 (rpsI) from Helicobacter pylori (strain J99 / ATCC 700824) (Campylobacter pylori J99).